Here is a 144-residue protein sequence, read N- to C-terminus: Large ribosomal subunit protein uL15 (144 aa).

Positions 1-54 are disordered; it reads MRLNTLSPAPGRVSAKKRVGRGIGSGLGKTAGRGHKGLKSRSGGSVKPGFEGGQ. Residues 21 to 31 show a composition bias toward gly residues; it reads RGIGSGLGKTA.

Belongs to the universal ribosomal protein uL15 family. In terms of assembly, part of the 50S ribosomal subunit.

Its function is as follows. Binds to the 23S rRNA. The sequence is that of Large ribosomal subunit protein uL15 from Saccharophagus degradans (strain 2-40 / ATCC 43961 / DSM 17024).